A 258-amino-acid chain; its full sequence is tRNA pseudouridine synthase A (258 aa).

The active-site Nucleophile is Asp52. Tyr111 lines the substrate pocket.

This sequence belongs to the tRNA pseudouridine synthase TruA family. In terms of assembly, homodimer.

The catalysed reaction is uridine(38/39/40) in tRNA = pseudouridine(38/39/40) in tRNA. Functionally, formation of pseudouridine at positions 38, 39 and 40 in the anticodon stem and loop of transfer RNAs. This Azorhizobium caulinodans (strain ATCC 43989 / DSM 5975 / JCM 20966 / LMG 6465 / NBRC 14845 / NCIMB 13405 / ORS 571) protein is tRNA pseudouridine synthase A.